Consider the following 250-residue polypeptide: Probable transcriptional regulatory protein SACE_2018 (250 aa).

Belongs to the TACO1 family.

The protein localises to the cytoplasm. The chain is Probable transcriptional regulatory protein SACE_2018 from Saccharopolyspora erythraea (strain ATCC 11635 / DSM 40517 / JCM 4748 / NBRC 13426 / NCIMB 8594 / NRRL 2338).